We begin with the raw amino-acid sequence, 801 residues long: Protein SDA1 homolog (801 aa).

Disordered regions lie at residues 1-40 (MGKV…ASRF), 495-517 (RKDR…FARP), 536-647 (GEQG…SKNS), and 739-801 (DYKF…RKPQ). Positions 24-40 (KSNAPTEGSNSGKASRF) are enriched in polar residues. Composition is skewed to acidic residues over residues 544–568 (DGTD…DADE) and 583–633 (NDAE…EASE). Basic residues-rich tracts occupy residues 770 to 779 (NKIRGRNRQR) and 787 to 801 (SLRH…RKPQ).

It belongs to the SDA1 family.

The protein localises to the nucleus. Functionally, required for 60S pre-ribosomal subunits export to the cytoplasm. Required for normal somatic gonad development and for regulation of germline development and proliferation. The chain is Protein SDA1 homolog (pro-3) from Caenorhabditis elegans.